The chain runs to 327 residues: tRNA dimethylallyltransferase (327 aa).

18 to 25 (GPTASGKT) is an ATP binding site. 20–25 (TASGKT) contacts substrate. 3 interaction with substrate tRNA regions span residues 43–46 (DSAL), 167–171 (QRVQR), and 251–256 (RCVGYR).

Belongs to the IPP transferase family. In terms of assembly, monomer. Mg(2+) is required as a cofactor.

The enzyme catalyses adenosine(37) in tRNA + dimethylallyl diphosphate = N(6)-dimethylallyladenosine(37) in tRNA + diphosphate. Catalyzes the transfer of a dimethylallyl group onto the adenine at position 37 in tRNAs that read codons beginning with uridine, leading to the formation of N6-(dimethylallyl)adenosine (i(6)A). The protein is tRNA dimethylallyltransferase of Methylibium petroleiphilum (strain ATCC BAA-1232 / LMG 22953 / PM1).